Here is a 218-residue protein sequence, read N- to C-terminus: Putative glutamine transport system permease protein GlnP (218 aa).

The ABC transmembrane type-1 domain occupies 19–208 (TLITLKYSVI…ILVMLISFIA (190 aa)). 4 helical membrane passes run 25–45 (YSVI…LCKV), 57–79 (FYTS…FASP), 86–108 (FTVF…SEVI), and 187–207 (FFPM…ISFI).

It belongs to the binding-protein-dependent transport system permease family. HisMQ subfamily.

It localises to the cell inner membrane. Its function is as follows. Part of the binding-protein-dependent transport system for glutamine; probably responsible for the translocation of the substrate across the membrane. The chain is Putative glutamine transport system permease protein GlnP (glnP) from Rickettsia bellii (strain RML369-C).